A 666-amino-acid polypeptide reads, in one-letter code: Protein SLY1 (666 aa).

4 consecutive repeat copies span residues 106–142, 220–257, 436–474, and 478–514. The interval 106-514 is 4 X approximate repeats; it reads KENIDIIVND…QNKSLEDGSD (409 aa).

This sequence belongs to the STXBP/unc-18/SEC1 family. In terms of assembly, interacts with SED5.

Its subcellular location is the cytoplasm. It localises to the membrane. Functionally, able to suppress the functional loss of YPT1. SLY1 is essential for cell viability. May interact indirectly, or directly with YPT1. This Saccharomyces cerevisiae (strain ATCC 204508 / S288c) (Baker's yeast) protein is Protein SLY1 (SLY1).